The following is a 217-amino-acid chain: Dual specificity phosphatase 29 (217 aa).

A Tyrosine-protein phosphatase domain is found at His46–Leu194. His138 to Arg145 contacts substrate. The Phosphocysteine intermediate role is filled by Cys139.

It belongs to the protein-tyrosine phosphatase family. Non-receptor class dual specificity subfamily.

It is found in the cytoplasm. The protein localises to the nucleus. It catalyses the reaction O-phospho-L-tyrosyl-[protein] + H2O = L-tyrosyl-[protein] + phosphate. The enzyme catalyses O-phospho-L-seryl-[protein] + H2O = L-seryl-[protein] + phosphate. The catalysed reaction is O-phospho-L-threonyl-[protein] + H2O = L-threonyl-[protein] + phosphate. Dual specificity phosphatase able to dephosphorylate phosphotyrosine, phosphoserine and phosphothreonine residues within the same substrate, with a preference for phosphotyrosine as a substrate. Involved in the modulation of AMPK and MAPK1/2 signaling pathways. This chain is Dual specificity phosphatase 29 (DUSP29), found in Anolis carolinensis (Green anole).